We begin with the raw amino-acid sequence, 133 residues long: MVFVNPLANALTSIYNNEMRRNKQAIIMPASKLVINVLRVMQKEGYVGEFEYIDDGRWGKITVQLLGRVNKCGPITPRYPLSYRQMIALPDYIRRYLPSKEIGIIIVSTSKGVMSHKEAARMRLGGVALGYVY.

It belongs to the universal ribosomal protein uS8 family. Part of the 30S ribosomal subunit.

One of the primary rRNA binding proteins, it binds directly to 16S rRNA central domain where it helps coordinate assembly of the platform of the 30S subunit. The chain is Small ribosomal subunit protein uS8 from Saccharolobus islandicus (strain L.S.2.15 / Lassen #1) (Sulfolobus islandicus).